The sequence spans 239 residues: Large ribosomal subunit protein uL3 (239 aa).

Disordered stretches follow at residues 140–166 and 211–239; these read SHRSIGSTGGRQDPGKTWKNKKMPGHM and PLPKEAPKPGKFKVAGEQAAEAPAVQEGA. The residue at position 151 (Gln151) is an N5-methylglutamine.

This sequence belongs to the universal ribosomal protein uL3 family. Part of the 50S ribosomal subunit. Forms a cluster with proteins L14 and L19. In terms of processing, methylated by PrmB.

In terms of biological role, one of the primary rRNA binding proteins, it binds directly near the 3'-end of the 23S rRNA, where it nucleates assembly of the 50S subunit. The protein is Large ribosomal subunit protein uL3 of Bradyrhizobium sp. (strain BTAi1 / ATCC BAA-1182).